The sequence spans 825 residues: Protein SEY1 homolog 2 (825 aa).

The segment at Met-1–Pro-21 is disordered. The Cytoplasmic portion of the chain corresponds to Met-1–Gln-728. A GB1/RHD3-type G domain is found at Gly-83–Pro-305. Residue Gly-93 to Ser-100 participates in GTP binding. A coiled-coil region spans residues Lys-373–Ile-397. The chain crosses the membrane as a helical span at residues Ile-729–Leu-749. The Lumenal segment spans residues Thr-750 to Pro-752. A helical membrane pass occupies residues Leu-753–Leu-773. The Cytoplasmic segment spans residues Gly-774 to Lys-825.

This sequence belongs to the TRAFAC class dynamin-like GTPase superfamily. GB1/RHD3 GTPase family. RHD3 subfamily.

Its subcellular location is the endoplasmic reticulum membrane. In terms of biological role, probable GTP-binding protein that may be involved in cell development. This chain is Protein SEY1 homolog 2, found in Entamoeba histolytica (strain ATCC 30459 / HM-1:IMSS / ABRM).